Consider the following 195-residue polypeptide: Glutamyl-tRNA(Gln) amidotransferase subunit C, mitochondrial (195 aa).

Residues 1 to 18 constitute a mitochondrion transit peptide; it reads MNLSTIGFQVIFKQRLRC.

This sequence belongs to the GatC family. In terms of assembly, subunit of the heterotrimeric GatCAB amidotransferase (AdT) complex, composed of A, B and C subunits.

It localises to the mitochondrion. The enzyme catalyses L-glutamyl-tRNA(Gln) + L-glutamine + ATP + H2O = L-glutaminyl-tRNA(Gln) + L-glutamate + ADP + phosphate + H(+). In terms of biological role, allows the formation of correctly charged Gln-tRNA(Gln) through the transamidation of misacylated Glu-tRNA(Gln) in the mitochondria. The reaction takes place in the presence of glutamine and ATP through an activated gamma-phospho-Glu-tRNA(Gln). The chain is Glutamyl-tRNA(Gln) amidotransferase subunit C, mitochondrial from Brugia malayi (Filarial nematode worm).